The sequence spans 1929 residues: Intraflagellar transport protein 140 (1929 aa).

WD repeat units lie at residues 76–116 (QVQV…PSYK) and 119–158 (LHQE…YSFE). The interval 774–795 (LSTPDTGSPAVEAEESPQRQTR) is disordered. LRR repeat units follow at residues 957–980 (STSL…TFTK), 1019–1044 (ISLL…SLAE), and 1510–1532 (AQSL…LADI).

It localises to the cell projection. It is found in the cilium. The protein resides in the flagellum. The protein localises to the cytoplasm. Its subcellular location is the cytoskeleton. It localises to the flagellum axoneme. It is found in the flagellum basal body. In terms of biological role, component of the intraflagellar transport complex A (IFT-A) involved in flagellar assembly. The chain is Intraflagellar transport protein 140 from Giardia intestinalis (strain ATCC 50803 / WB clone C6) (Giardia lamblia).